Here is a 482-residue protein sequence, read N- to C-terminus: Iroquois-class homeodomain protein irx-5 (482 aa).

A DNA-binding region (homeobox) is located at residues 109 to 171; sequence DPAYRKNATR…NARRRLKKEN (63 aa). Disordered stretches follow at residues 173-307 and 462-482; these read MTWT…HQSH and QSQADLNKDTPYEMKKGMSSI. Residues 182 to 198 show a composition bias toward acidic residues; sequence EDEEDDENIDLEKNEED. The segment covering 199 to 256 has biased composition (basic and acidic residues); it reads DPRKLEEKGDQDGDAGDQKRSPSAVDFDRLEGEVRQGKELDQTRSDSEQNEVEERNDL. The segment covering 264 to 273 has biased composition (pro residues); the sequence is PTSPLCPPDQ. Residues 284-305 are compositionally biased toward basic residues; the sequence is HRHTVHNHHHQSIQQLHHHSHQ. Positions 467–482 are enriched in basic and acidic residues; sequence LNKDTPYEMKKGMSSI.

It belongs to the TALE/IRO homeobox family. Expressed in the neural plate in overlapping patterns with other irx members, which all share an anterior border of expression. Broadly expressed in the tailbud rhombencephalon (hindbrain). Outside the nervous system and at tailbud stages, expressed in the developing otic vesicle and branchial arches.

The protein localises to the nucleus. In terms of biological role, acts partially redundantly with other irx members in neural patterning. Required for formation of the posterior forebrain, midbrain, hindbrain, and to a lesser extent, spinal cord. Patterns the neuroectoderm in both the anterior/posterior and dorsal/ventral axes. Does not appear to play a role in pronephros kidney development. Involved in craniofacial and gonadal development. Modulates the migration of progenitor cell populations in branchial arches and gonads by repressing CXCL12. The sequence is that of Iroquois-class homeodomain protein irx-5 from Xenopus tropicalis (Western clawed frog).